The primary structure comprises 163 residues: Beta-carbonic anhydrase 1 (163 aa).

Zn(2+)-binding residues include C35, D37, H88, and C91.

It belongs to the beta-class carbonic anhydrase family. In terms of assembly, homotetramer. The cofactor is Zn(2+).

It carries out the reaction hydrogencarbonate + H(+) = CO2 + H2O. Functionally, catalyzes the reversible hydration of carbon dioxide to form bicarbonate. This chain is Beta-carbonic anhydrase 1, found in Mycobacterium bovis (strain ATCC BAA-935 / AF2122/97).